Consider the following 329-residue polypeptide: 4-hydroxythreonine-4-phosphate dehydrogenase (329 aa).

The substrate site is built by H136 and T137. 3 residues coordinate a divalent metal cation: H166, H211, and H266. Positions 274, 283, and 292 each coordinate substrate.

Belongs to the PdxA family. As to quaternary structure, homodimer. It depends on Zn(2+) as a cofactor. Mg(2+) serves as cofactor. Co(2+) is required as a cofactor.

It is found in the cytoplasm. The enzyme catalyses 4-(phosphooxy)-L-threonine + NAD(+) = 3-amino-2-oxopropyl phosphate + CO2 + NADH. It participates in cofactor biosynthesis; pyridoxine 5'-phosphate biosynthesis; pyridoxine 5'-phosphate from D-erythrose 4-phosphate: step 4/5. Functionally, catalyzes the NAD(P)-dependent oxidation of 4-(phosphooxy)-L-threonine (HTP) into 2-amino-3-oxo-4-(phosphooxy)butyric acid which spontaneously decarboxylates to form 3-amino-2-oxopropyl phosphate (AHAP). The chain is 4-hydroxythreonine-4-phosphate dehydrogenase from Escherichia coli O6:H1 (strain CFT073 / ATCC 700928 / UPEC).